Reading from the N-terminus, the 314-residue chain is Deoxymugineic acid synthase 1-B (314 aa).

The disordered stretch occupies residues 1–22 (MGAGDKTAAGMPRIGMGTAVQG). Asp44 is a binding site for NADP(+). Catalysis depends on Tyr49, which acts as the Proton donor. His112 lines the substrate pocket. Residues 158–159 (AN), Gln180, 258–266 (FDEARMREN), and 273–281 (ELTEEERRR) contribute to the NADP(+) site.

Belongs to the aldo/keto reductase family. In terms of tissue distribution, mostly expressed in root tissues, observed in mesocotyl and embryonic roots, seedling roots, crown and seedling leafes, mature bracts, anthers, pistil, caryopsis and embryos.

The enzyme catalyses 2'-deoxymugineate + NAD(+) = 3''-deamino-3''-oxonicotianamine + NADH + H(+). It catalyses the reaction 2'-deoxymugineate + NADP(+) = 3''-deamino-3''-oxonicotianamine + NADPH + H(+). The protein operates within siderophore biosynthesis. Functionally, catalyzes the reduction of a 3''-keto intermediate during the biosynthesis of 2'-deoxymugineic acid (DMA) from L-Met. Involved in the formation of phytosiderophores (MAs) belonging to the mugineic acid family and required to acquire iron. The sequence is that of Deoxymugineic acid synthase 1-B from Triticum aestivum (Wheat).